Here is a 145-residue protein sequence, read N- to C-terminus: UPF0299 membrane protein plu1549 (145 aa).

The next 4 membrane-spanning stretches (helical) occupy residues 6–26 (VLIVGWQYLRAFVLIYLCLLT), 34–54 (LPIIIPGSIIGMLILFVLLAF), 65–85 (GCSLLLKNMTLLFLPIGVGVM), and 95–115 (IIPIVFSCLISTAIVMIIVAY).

The protein belongs to the UPF0299 family.

It localises to the cell inner membrane. The sequence is that of UPF0299 membrane protein plu1549 from Photorhabdus laumondii subsp. laumondii (strain DSM 15139 / CIP 105565 / TT01) (Photorhabdus luminescens subsp. laumondii).